Reading from the N-terminus, the 189-residue chain is Threonylcarbamoyl-AMP synthase (189 aa).

In terms of domain architecture, YrdC-like spans 6 to 189 (TAIFTPIIDA…VLTGEQIRQG (184 aa)).

This sequence belongs to the SUA5 family. TsaC subfamily.

It localises to the cytoplasm. The catalysed reaction is L-threonine + hydrogencarbonate + ATP = L-threonylcarbamoyladenylate + diphosphate + H2O. In terms of biological role, required for the formation of a threonylcarbamoyl group on adenosine at position 37 (t(6)A37) in tRNAs that read codons beginning with adenine. Catalyzes the conversion of L-threonine, HCO(3)(-)/CO(2) and ATP to give threonylcarbamoyl-AMP (TC-AMP) as the acyladenylate intermediate, with the release of diphosphate. The sequence is that of Threonylcarbamoyl-AMP synthase from Serratia proteamaculans (strain 568).